A 109-amino-acid polypeptide reads, in one-letter code: Homeobox protein E60 (109 aa).

The interval Pro-1–Gln-31 is disordered. Residues Glu-20–Ser-79 constitute a DNA-binding region (homeobox).

The protein belongs to the engrailed homeobox family.

It localises to the nucleus. This is Homeobox protein E60 from Apis mellifera (Honeybee).